A 739-amino-acid chain; its full sequence is POU domain, class 2, transcription factor 1 (739 aa).

Residues 1–11 are compositionally biased toward polar residues; the sequence is MNNPSETSKPS. Disordered regions lie at residues 1–39, 67–95, 253–277, 353–378, and 489–553; these read MNNP…GGPI, SLNV…SVQA, TPIQ…EEPS, DSTL…RRKK, and SVTG…SSPL. Residues 81 to 95 show a composition bias toward low complexity; the sequence is SQQPSQPSQQPSVQA. Residues 274–348 form the POU-specific domain; sequence EEPSDLEELE…LLEKWLNDAE (75 aa). Positions 353-364 are enriched in low complexity; it reads DSTLSSPSALNS. The segment at residues 375–434 is a DNA-binding region (homeobox); sequence RRKKRTSIETNIRVALEKSFLENQKPTSEEITMIADQLNMEKEVIRVWFCNRRQKEKRIN. The segment covering 489 to 552 has biased composition (low complexity); that stretch reads SVTGTTETTS…QTTSTPLSSP (64 aa).

It belongs to the POU transcription factor family. Class-2 subfamily. As to quaternary structure, interacts with NR3C1, AR and PGR.

Its subcellular location is the nucleus. Transcription factor that binds to the octamer motif (5'-ATTTGCAT-3') and activates the promoters of the genes for some small nuclear RNAs (snRNA) and of genes such as those for histone H2B and immunoglobulins. Modulates transcription transactivation by NR3C1, AR and PGR. This chain is POU domain, class 2, transcription factor 1 (POU2F1), found in Gallus gallus (Chicken).